The sequence spans 130 residues: Small ribosomal subunit protein uS9 (130 aa).

The protein belongs to the universal ribosomal protein uS9 family.

This Bacillus thuringiensis subsp. konkukian (strain 97-27) protein is Small ribosomal subunit protein uS9.